We begin with the raw amino-acid sequence, 199 residues long: Small ribosomal subunit protein uS5 (199 aa).

The interval 1 to 29 is disordered; the sequence is MATAGRRGGAASERRERRESRRQEASPEK. Over residues 12-27 the composition is skewed to basic and acidic residues; the sequence is SERRERRESRRQEASP. The S5 DRBM domain maps to 32 to 95; sequence FLERVVTINR…EEAKKHFFTV (64 aa).

This sequence belongs to the universal ribosomal protein uS5 family. In terms of assembly, part of the 30S ribosomal subunit. Contacts proteins S4 and S8.

Its function is as follows. With S4 and S12 plays an important role in translational accuracy. In terms of biological role, located at the back of the 30S subunit body where it stabilizes the conformation of the head with respect to the body. This is Small ribosomal subunit protein uS5 from Acidothermus cellulolyticus (strain ATCC 43068 / DSM 8971 / 11B).